Here is a 185-residue protein sequence, read N- to C-terminus: Translation initiation factor IF-3 (185 aa).

It belongs to the IF-3 family. In terms of assembly, monomer.

It is found in the cytoplasm. Functionally, IF-3 binds to the 30S ribosomal subunit and shifts the equilibrium between 70S ribosomes and their 50S and 30S subunits in favor of the free subunits, thus enhancing the availability of 30S subunits on which protein synthesis initiation begins. This chain is Translation initiation factor IF-3, found in Rickettsia felis (strain ATCC VR-1525 / URRWXCal2) (Rickettsia azadi).